The chain runs to 346 residues: Ornithine carbamoyltransferase, catabolic (346 aa).

Carbamoyl phosphate contacts are provided by residues 58 to 61 (STRT), Asn-85, Arg-109, and 136 to 139 (HPTQ). L-ornithine is bound by residues Asn-168, Asp-239, and 243–244 (SL). Residues 280-281 (CL) and Arg-332 contribute to the carbamoyl phosphate site.

The protein belongs to the aspartate/ornithine carbamoyltransferase superfamily. OTCase family.

Its subcellular location is the cytoplasm. The enzyme catalyses carbamoyl phosphate + L-ornithine = L-citrulline + phosphate + H(+). The protein operates within amino-acid degradation; L-arginine degradation via ADI pathway; carbamoyl phosphate from L-arginine: step 2/2. In terms of biological role, reversibly catalyzes the transfer of the carbamoyl group from carbamoyl phosphate (CP) to the N(epsilon) atom of ornithine (ORN) to produce L-citrulline. This is Ornithine carbamoyltransferase, catabolic from Mycoplasma pneumoniae (strain ATCC 29342 / M129 / Subtype 1) (Mycoplasmoides pneumoniae).